The following is a 287-amino-acid chain: MDKITRNIREGIHILLPFYENLPDISLSLGKSPLPSLEYGTNYFLQLSRVNDLNRLPTDMLSLFTHDIMLPETDMEKVYDILNIKSVKSYGKSIKADAVVADLSARNRLFKKDRELIKSNNYLTDNNLYISDYKMLTFEVFRPLFDLSSEKYCIVKLPTLFGKCVIDTIRVYCSLFKSVRLFKCASDSWLKDSAIMVASDIYKKNIDIFMSHIRSVLKSQYWKDSNNVQFSILKESVDKEFINKFLEFSTSVYESLYYVHSLLYSSMISDNKSIENEYQKKLTKLLL.

Heterodimer of a large and a small subunit.

The protein resides in the virion. It carries out the reaction a 5'-end (5'-triphosphoguanosine)-ribonucleoside in mRNA + S-adenosyl-L-methionine = a 5'-end (N(7)-methyl 5'-triphosphoguanosine)-ribonucleoside in mRNA + S-adenosyl-L-homocysteine. In terms of biological role, catalyzes the last reaction in the mRNA cap formation pathway. This Sus scrofa (Pig) protein is mRNA-capping enzyme small subunit.